The following is a 177-amino-acid chain: GTP-dependent dephospho-CoA kinase (177 aa).

Residues Asp-48, Val-49, Val-50, Asp-67, Lys-69, and Glu-124 each contribute to the GTP site.

The protein belongs to the GTP-dependent DPCK family.

The catalysed reaction is 3'-dephospho-CoA + GTP = GDP + CoA + H(+). Its pathway is cofactor biosynthesis; coenzyme A biosynthesis. Catalyzes the GTP-dependent phosphorylation of the 3'-hydroxyl group of dephosphocoenzyme A to form coenzyme A (CoA). This Pyrococcus furiosus (strain ATCC 43587 / DSM 3638 / JCM 8422 / Vc1) protein is GTP-dependent dephospho-CoA kinase.